We begin with the raw amino-acid sequence, 760 residues long: MADDGLLLNFSIGDTNIIKPETKLKGGTWRDRLSAKKIAQHRTKNPRKPGEERPSSGKGPQNPNRIQVSSSRPSKRQKTDADGDNEKSRHDNKQHPRQFVSSLFSKNPTPRNAEEEPEQEPVEDAKPTNAPLIDGLDTFTNLGLSPSLAAHLLTKLELKAPTGIQKASMSQLLKEDSDAFIQAETGSGKTLAYLLPLVQRIMTVSNPKNMSTNSKGEPIVHRDSGLFAIVLAPTRELCKQISVVLESLLRCAHWIVAGTVIGGEKKKSEKARLRKGLNILVATPGRLADHLENTQALDVSNVRWLVLDEGDRLMELGFEKELQGIIQKLDARQRPSRIPGIPTKRTTILCSATLKMNVQKLGEISLKDAVHIKADPADEDGETKRKDDDGFRVPAQLKQSYAIVAAKLRLVTLTAYLKRTFMRKGSVMKAIVFVSCADSVDFHFEVFSRRKQYRDESEDEDEEKEDDDEDNSKTKSEASPHGTIAPAVAFSNPSNPVKLHKLHGSLPQHVRTATLNAFSREREPSVLVCTDVASRGLDLPNVDLVIEYDPAFSADDHTHRIGRTARLGRDGRALIFLMPGCEENYVEILKQGYRDGGKALTRTTAEDILKRGFGGNITSETKNWEEKATDWQMDLERWAVDNPQYLEMARRAYQSHIRAYATHIASERSMFNIKELHLGHLAKSFALRDRPSKINVPGLRPGDKEAKKDYKAERNTVGKKRKAGGRDDDFQPSNDATSAAQKMRAKLKEHMAGASEFNLA.

The segment covering 23 to 34 (KLKGGTWRDRLS) has biased composition (basic and acidic residues). Positions 23–129 (KLKGGTWRDR…EPVEDAKPTN (107 aa)) are disordered. A compositionally biased stretch (basic residues) spans 38 to 47 (IAQHRTKNPR). Over residues 58–72 (KGPQNPNRIQVSSSR) the composition is skewed to polar residues. Basic and acidic residues predominate over residues 77–94 (QKTDADGDNEKSRHDNKQ). Over residues 99-110 (FVSSLFSKNPTP) the composition is skewed to polar residues. The Q motif signature appears at 137 to 166 (DTFTNLGLSPSLAAHLLTKLELKAPTGIQK). A Helicase ATP-binding domain is found at 170–372 (SQLLKEDSDA…EISLKDAVHI (203 aa)). An ATP-binding site is contributed by 183–190 (AETGSGKT). The short motif at 308–311 (DEGD) is the DEAD box element. Positions 396–609 (QLKQSYAIVA…LTRTTAEDIL (214 aa)) constitute a Helicase C-terminal domain. Disordered stretches follow at residues 453–490 (YRDE…AVAF) and 692–760 (SKIN…FNLA). Over residues 456–470 (ESEDEDEEKEDDDED) the composition is skewed to acidic residues. Positions 701 to 716 (PGDKEAKKDYKAERNT) are enriched in basic and acidic residues. A compositionally biased stretch (polar residues) spans 731 to 740 (QPSNDATSAA).

The protein belongs to the DEAD box helicase family. DDX31/DBP7 subfamily.

The protein localises to the nucleus. Its subcellular location is the nucleolus. The enzyme catalyses ATP + H2O = ADP + phosphate + H(+). Its function is as follows. ATP-binding RNA helicase involved in the biogenesis of 60S ribosomal subunits and is required for the normal formation of 25S and 5.8S rRNAs. The chain is ATP-dependent RNA helicase dbp7 (dbp7) from Aspergillus oryzae (strain ATCC 42149 / RIB 40) (Yellow koji mold).